A 260-amino-acid polypeptide reads, in one-letter code: Ribosomal RNA small subunit methyltransferase A (260 aa).

Residues Leu-23, Gly-48, Glu-69, Asp-94, and Asn-110 each coordinate S-adenosyl-L-methionine.

The protein belongs to the class I-like SAM-binding methyltransferase superfamily. rRNA adenine N(6)-methyltransferase family. RsmA subfamily.

The protein localises to the cytoplasm. The catalysed reaction is adenosine(1518)/adenosine(1519) in 16S rRNA + 4 S-adenosyl-L-methionine = N(6)-dimethyladenosine(1518)/N(6)-dimethyladenosine(1519) in 16S rRNA + 4 S-adenosyl-L-homocysteine + 4 H(+). Its function is as follows. Specifically dimethylates two adjacent adenosines (A1518 and A1519) in the loop of a conserved hairpin near the 3'-end of 16S rRNA in the 30S particle. May play a critical role in biogenesis of 30S subunits. This chain is Ribosomal RNA small subunit methyltransferase A, found in Thermotoga neapolitana (strain ATCC 49049 / DSM 4359 / NBRC 107923 / NS-E).